Reading from the N-terminus, the 1063-residue chain is Coiled-coil domain-containing protein 187 (1063 aa).

7 disordered regions span residues 1–41 (MPTL…AADW), 62–184 (RWPG…SRLH), 219–278 (RVEA…KDED), 300–319 (PPPVLRRHHSKDPSRDPALT), 392–484 (RKGG…ERLG), 496–539 (GQAC…ATQP), and 551–658 (WEDP…LEEK). Residues 111–124 (SSVSSGRLSCSSGG) show a composition bias toward low complexity. The segment covering 146–160 (RKSDARLEQLRDKIR) has biased composition (basic and acidic residues). A compositionally biased stretch (polar residues) spans 163 to 181 (AWQQGSCASLGTSAPSSAS). Residues 219–233 (RVEAKASHGQGRELS) are compositionally biased toward basic and acidic residues. Composition is skewed to basic and acidic residues over residues 431–442 (TERKHSSLERAR) and 472–484 (SFQRPESPHERLG). A compositionally biased stretch (low complexity) spans 508–517 (QRQGPSSQRP). Residues 816 to 851 (HLRHKQAQLQALETTAKVLKQRVDSLTAKLQGAEAL) are a coiled coil. The tract at residues 1010–1030 (PRSCGKGDPADRPWAGWSGGR) is disordered.

In Homo sapiens (Human), this protein is Coiled-coil domain-containing protein 187.